The primary structure comprises 215 residues: Putative lipoprotein NMB1124/NMB1162 (215 aa).

The first 16 residues, 1-16 (MKPLILGLAAVLALSA), serve as a signal peptide directing secretion. A lipid anchor (N-palmitoyl cysteine) is attached at Cys-17. A lipid anchor (S-diacylglycerol cysteine) is attached at Cys-17.

The protein resides in the cell membrane. The chain is Putative lipoprotein NMB1124/NMB1162 from Neisseria meningitidis serogroup B (strain ATCC BAA-335 / MC58).